The following is a 537-amino-acid chain: Caspase recruitment domain-containing protein 8 (537 aa).

A compositionally biased stretch (basic and acidic residues) spans 1-23; it reads MEKKECPEKSSSSEEELPRRDSG. Disordered regions lie at residues 1-28 and 113-133; these read MEKKECPEKSSSSEEELPRRDSGSSRNI and GDIPSVSEEQESSEGQDSGDI. The interval 161–296 is ZU5; that stretch reads FLGPEGNVDV…FYAVLESPSF (136 aa). The FIIND domain maps to 161 to 446; the sequence is FLGPEGNVDV…LQLVAASAPP (286 aa). The interval 297-446 is UPA; sequence SLMGILLRIA…LQLVAASAPP (150 aa). One can recognise a CARD domain in the interval 446–536; the sequence is PPFSGAAFVK…YLVSYLRQQN (91 aa).

Interacts with DPP9; leading to inhibit activation of the inflammasome. DPP9 acts via formation of a ternary complex, composed of a DPP9 homodimer, one full-length CARD8 protein, and one cleaved C-terminus of CARD8 (Caspase recruitment domain-containing protein 8, C-terminus). Interacts with DPP8; leading to inhibit activation of the inflammasome, probably via formation of a ternary complex with DPP8. Interacts with NLRP3. Interacts with IKBKG/NEMO. Interacts with DRAL. Binds to caspase-1 (CASP1), CARD16/pseudo-ICE and CARD18/ICEBERG. Interacts with NLRP2 (via NACHT domain). As to quaternary structure, interacts with the C-terminal part of CARD8 (Caspase recruitment domain-containing protein 8, C-terminus) in absence of pathogens and other damage-associated signals. In terms of assembly, interacts with the N-terminal part of CARD8 (Caspase recruitment domain-containing protein 8, N-terminus) in absence of pathogens and other damage-associated signals. Homomultimer; forms the CARD8 inflammasome polymeric complex, a filament composed of homopolymers of this form in response to pathogens and other damage-associated signals. The CARD8 inflammasome polymeric complex directly recruits pro-caspase-1 (proCASP1) independently of PYCARD/ASC. Interacts (via CARD domain) with CASP1 (via CARD domain); leading to CASP1 activation. Undergoes autocatalytic processing within the FIIND domain to generate the N-terminal and C-terminal parts, which are associated non-covalently in absence of pathogens and other damage-associated signals. In terms of processing, ubiquitinated by the N-end rule pathway in response to pathogens and other damage-associated signals, leading to its degradation by the proteasome and subsequent release of the cleaved C-terminal part of the protein (Caspase recruitment domain-containing protein 8, C-terminus), which polymerizes and forms the CARD8 inflammasome. Post-translationally, (Microbial infection) Proteolytic cleavage by HIV-1 protease in the disordered region and within the ZU5 region of the FIIND domain promotes ubiquitination of the N-terminal part by the N-end rule pathway and degradation by the proteasome, releasing the cleaved C-terminal part of the protein (Caspase recruitment domain-containing protein 8, C-terminus), which polymerizes and forms the CARD8 inflammasome. Undergoes less autocatalytic processing within the FIIND domain compared to isoform 5. In terms of tissue distribution, high expression in lung, ovary, testis and placenta. Lower expression in heart, kidney and liver. Also expressed in spleen, lymph node and bone marrow.

The protein resides in the cytoplasm. It localises to the nucleus. It is found in the inflammasome. With respect to regulation, CARD8 inflammasome is activated by HIV-1 protease activity: HIV-1 protease cleaves CARD8, promoting ubiquitination and degradation of the N-terminal part, releasing the cleaved C-terminal part of the protein (Caspase recruitment domain-containing protein 8, C-terminus), which polymerizes and forms the CARD8 inflammasome. CARD8 inflammasome is inhibited by DPP8 and DPP9, which sequester the C-terminal fragment of CARD8 (Caspase recruitment domain-containing protein 8, C-terminus) in a ternary complex, thereby preventing CARD8 oligomerization and activation. CARD8 inflammasome is activated by Val-boroPro (Talabostat, PT-100), an inhibitor of dipeptidyl peptidases DPP8 and DPP9. Val-boroPro relieves inhibition of DPP8 and/or DPP9 by inducing the proteasome-mediated destruction of the N-terminal part of CARD8, releasing its C-terminal part from autoinhibition. Indirectly activated by the pseudodipeptide CQ31. CQ31 directly inactivates the peptidases PEPD and XPNPEP1, leading to an accumulation of dipeptides that weaky inhibit DDP8 and DPP9, relieving DPP8- and/or DPP9-mediated inhibition of CARD8. Inflammasome sensor, which mediates inflammasome activation in response to various pathogen-associated signals, leading to subsequent pyroptosis of CD4(+) T-cells and macrophages. Inflammasomes are supramolecular complexes that assemble in the cytosol in response to pathogens and other damage-associated signals and play critical roles in innate immunity and inflammation. Acts as a recognition receptor (PRR): recognizes specific pathogens and other damage-associated signals, such as HIV-1 protease activity or Val-boroPro inhibitor, and mediates CARD8 inflammasome activation. In response to pathogen-associated signals, the N-terminal part of CARD8 is degraded by the proteasome, releasing the cleaved C-terminal part of the protein (Caspase recruitment domain-containing protein 8, C-terminus), which polymerizes to initiate the formation of the inflammasome complex: the CARD8 inflammasome directly recruits pro-caspase-1 (proCASP1) independently of PYCARD/ASC and promotes caspase-1 (CASP1) activation, which subsequently cleaves and activates inflammatory cytokines IL1B and IL18 and gasdermin-D (GSDMD), leading to pyroptosis. Ability to sense HIV-1 protease activity leads to the clearance of latent HIV-1 in patient CD4(+) T-cells after viral reactivation; in contrast, HIV-1 can evade CARD8-sensing when its protease remains inactive in infected cells prior to viral budding. Also acts as a negative regulator of the NLRP3 inflammasome. May also act as an inhibitor of NF-kappa-B activation. In terms of biological role, constitutes the precursor of the CARD8 inflammasome, which mediates autoproteolytic processing within the FIIND domain to generate the N-terminal and C-terminal parts, which are associated non-covalently in absence of pathogens and other damage-associated signals. Functionally, regulatory part that prevents formation of the CARD8 inflammasome: in absence of pathogens and other damage-associated signals, interacts with the C-terminal part of CARD8 (Caspase recruitment domain-containing protein 8, C-terminus), preventing activation of the CARD8 inflammasome. In response to pathogen-associated signals, this part is ubiquitinated by the N-end rule pathway and degraded by the proteasome, releasing the cleaved C-terminal part of the protein, which polymerizes and forms the CARD8 inflammasome. Its function is as follows. Constitutes the active part of the CARD8 inflammasome. In absence of pathogens and other damage-associated signals, interacts with the N-terminal part of CARD8 (Caspase recruitment domain-containing protein 8, N-terminus), preventing activation of the CARD8 inflammasome. In response to pathogen-associated signals, the N-terminal part of CARD8 is degraded by the proteasome, releasing this form, which polymerizes to form the CARD8 inflammasome complex: the CARD8 inflammasome complex then directly recruits pro-caspase-1 (proCASP1) and promotes caspase-1 (CASP1) activation, leading to gasdermin-D (GSDMD) cleavage and subsequent pyroptosis. This chain is Caspase recruitment domain-containing protein 8, found in Homo sapiens (Human).